The primary structure comprises 353 residues: tRNA-specific 2-thiouridylase MnmA 2 (353 aa).

6–13 (LLSGGVDS) provides a ligand contact to ATP. Residues 92-94 (NPD) are interaction with target base in tRNA. The Nucleophile role is filled by cysteine 97. Residues cysteine 97 and cysteine 192 are joined by a disulfide bond. Glycine 120 serves as a coordination point for ATP. An interaction with tRNA region spans residues 142–144 (KDQ). Cysteine 192 serves as the catalytic Cysteine persulfide intermediate.

Belongs to the MnmA/TRMU family.

The protein resides in the cytoplasm. It catalyses the reaction S-sulfanyl-L-cysteinyl-[protein] + uridine(34) in tRNA + AH2 + ATP = 2-thiouridine(34) in tRNA + L-cysteinyl-[protein] + A + AMP + diphosphate + H(+). In terms of biological role, catalyzes the 2-thiolation of uridine at the wobble position (U34) of tRNA, leading to the formation of s(2)U34. This is tRNA-specific 2-thiouridylase MnmA 2 from Bacteroides fragilis (strain YCH46).